Here is a 586-residue protein sequence, read N- to C-terminus: Septin-9 (586 aa).

Residue Met-1 is modified to N-acetylmethionine. Residues 1–14 (MKKSYSGGTRTSSG) show a composition bias toward low complexity. 3 disordered regions span residues 1–49 (MKKS…RVQT), 62–108 (KFQD…SRRT), and 134–268 (RAEV…PASR). Phosphoserine is present on residues Ser-22 and Ser-30. Residues Thr-38, Thr-42, and Thr-49 each carry the phosphothreonine modification. N6-acetyllysine is present on Lys-62. Ser-82, Ser-85, Ser-89, and Ser-96 each carry phosphoserine. Basic and acidic residues predominate over residues 134-151 (RAEVLGHKTPEPAPRRTE). Residue Thr-142 is modified to Phosphothreonine. A Phosphotyrosine modification is found at Tyr-278. A Septin-type G domain is found at 295–567 (QGFEFNIMVV…EAYRVKRLNE (273 aa)). The G1 motif stretch occupies residues 305–312 (GQSGLGKS). Position 305-312 (305-312 (GQSGLGKS)) interacts with GTP. Phosphoserine is present on residues Ser-327 and Ser-332. GTP-binding positions include Thr-339, Gly-365, 445-453 (KADTLTLEE), Gly-501, and Arg-516. Residues 362 to 365 (DTPG) are G3 motif. Residues 444–447 (AKAD) are G4 motif.

This sequence belongs to the TRAFAC class TrmE-Era-EngA-EngB-Septin-like GTPase superfamily. Septin GTPase family. As to quaternary structure, septins polymerize into heterooligomeric protein complexes that form filaments, and associate with cellular membranes, actin filaments, and microtubules. GTPase activity is required for filament formation. Interacts with SEPTIN2, SEPTIN6, SEPTIN7, SEPTIN11 and SEPTIN14. Interacts with RTKN and ARHGEF18. In a mesenchymal cell line, Rho/RTKN signals cause disruption of wild-type septin filaments, but not of those containing isoform 2 variants HNA Trp-106 and Phe-111. In a mesenchymal cell line, isoform 2 variants HNA Trp-106 and Phe-111, but not wild type, form filaments with SEPTIN4. Widely expressed. Isoforms are differentially expressed in testes, kidney, liver heart, spleen, brain, peripheral blood leukocytes, skeletal muscle and kidney. Specific isoforms appear to demonstrate tissue specificity. Isoform 5 is the most highly expressed in fetal tissue. Isoform 1 is detected in all tissues except the brain and thymus, while isoform 2, isoform 3, and isoform 4 are detected at low levels in approximately half of the fetal tissues.

It is found in the cytoplasm. Its subcellular location is the cytoskeleton. Its function is as follows. Filament-forming cytoskeletal GTPase. May play a role in cytokinesis (Potential). May play a role in the internalization of 2 intracellular microbial pathogens, Listeria monocytogenes and Shigella flexneri. The polypeptide is Septin-9 (Homo sapiens (Human)).